The chain runs to 161 residues: Cell cycle link protein (161 aa).

Residues 9 to 21 form a binding to host SKP1 protein region; it reads MPDDVKREIKEIY. The LXCXE motif, interaction with host RBR motif lies at 111–115; that stretch reads LYCDE.

As to quaternary structure, interacts with host SKP1. Interacts (via LXCXE domain) with host retinoblastoma-related protein 2 (RBR2). Interacts (via LXCXE domain) with human RB1. Interacts (via LXCXE domain) with retinoblastoma-related proteins (RBR).

Functionally, interacts with and disrupts the function of host retinoblastoma-related proteins RBR, which are key regulators of the cell cycle. Induces transcriptional activation of E2F-regulated S-phase and G2/M-phase-specific genes. Inactivation of the ability of RBR to arrest the cell cycle leads to the stimulation of viral DNA replication. Acts as a suppressor of RNA-mediated gene silencing, also known as post-transcriptional gene silencing (PTGS), a mechanism of plant viral defense that limits the accumulation of viral RNAs. The sequence is that of Cell cycle link protein (DNA-C) from Musa (BBTV).